Consider the following 512-residue polypeptide: tRNA-2-methylthio-N(6)-dimethylallyladenosine synthase (512 aa).

Residues Met1 to Ala22 are disordered. The region spanning Arg25 to His141 is the MTTase N-terminal domain. [4Fe-4S] cluster-binding residues include Cys34, Cys70, Cys104, Cys178, Cys182, and Cys185. The Radical SAM core domain occupies Arg164–Glu400. Positions Arg403–Val471 constitute a TRAM domain.

The protein belongs to the methylthiotransferase family. MiaB subfamily. As to quaternary structure, monomer. The cofactor is [4Fe-4S] cluster.

The protein resides in the cytoplasm. It catalyses the reaction N(6)-dimethylallyladenosine(37) in tRNA + (sulfur carrier)-SH + AH2 + 2 S-adenosyl-L-methionine = 2-methylsulfanyl-N(6)-dimethylallyladenosine(37) in tRNA + (sulfur carrier)-H + 5'-deoxyadenosine + L-methionine + A + S-adenosyl-L-homocysteine + 2 H(+). Catalyzes the methylthiolation of N6-(dimethylallyl)adenosine (i(6)A), leading to the formation of 2-methylthio-N6-(dimethylallyl)adenosine (ms(2)i(6)A) at position 37 in tRNAs that read codons beginning with uridine. The chain is tRNA-2-methylthio-N(6)-dimethylallyladenosine synthase from Mycobacterium bovis (strain ATCC BAA-935 / AF2122/97).